Here is a 165-residue protein sequence, read N- to C-terminus: MALSIHDKKIIVSKINKISNTALSAVTADLQGVCVNKINELRKSGREVGVKMSIVQNTLLSLAIKNTVFECLKKKLKGSTFIAYSMIHPGSGARLFKEFSKKNTQFKITGAAFEGKLLSILEINQLADMPTYKEAIIKLLLTWKMLIAGKLIYTLSAIKQKKETS.

Belongs to the universal ribosomal protein uL10 family. In terms of assembly, part of the ribosomal stalk of the 50S ribosomal subunit. The N-terminus interacts with L11 and the large rRNA to form the base of the stalk. The C-terminus forms an elongated spine to which L12 dimers bind in a sequential fashion forming a multimeric L10(L12)X complex.

Functionally, forms part of the ribosomal stalk, playing a central role in the interaction of the ribosome with GTP-bound translation factors. This Buchnera aphidicola subsp. Acyrthosiphon pisum (strain 5A) protein is Large ribosomal subunit protein uL10.